The chain runs to 124 residues: Large ribosomal subunit protein bL12 (124 aa).

Belongs to the bacterial ribosomal protein bL12 family. As to quaternary structure, homodimer. Part of the ribosomal stalk of the 50S ribosomal subunit. Forms a multimeric L10(L12)X complex, where L10 forms an elongated spine to which 2 to 4 L12 dimers bind in a sequential fashion. Binds GTP-bound translation factors.

Forms part of the ribosomal stalk which helps the ribosome interact with GTP-bound translation factors. Is thus essential for accurate translation. In Paracoccus denitrificans (strain Pd 1222), this protein is Large ribosomal subunit protein bL12.